The following is a 50-amino-acid chain: Small, acid-soluble spore protein P (50 aa).

A disordered region spans residues 1 to 50; it reads MSKRKMGPKQQKNPELPKSPEQPYGEPLSGSKKEKKANHSGQKHNPHHGL. Positions 33–50 are enriched in basic residues; it reads KEKKANHSGQKHNPHHGL.

The protein belongs to the SspP family.

Its subcellular location is the spore core. This is Small, acid-soluble spore protein P from Oceanobacillus iheyensis (strain DSM 14371 / CIP 107618 / JCM 11309 / KCTC 3954 / HTE831).